The sequence spans 218 residues: Glutathione S-transferase Mu 2 (218 aa).

The GST N-terminal domain occupies 2–88 (PIILGYWNIR…YIARKHNLCG (87 aa)). Residue 7-8 (YW) participates in glutathione binding. A phosphoserine mark is found at S27 and S44. Glutathione contacts are provided by residues 43-46 (RSQW), K50, 59-60 (NL), and 72-73 (QS). A GST C-terminal domain is found at 90–208 (TEKEKIQEDI…KSSRFLPRPV (119 aa)). A substrate-binding site is contributed by Y116.

The protein belongs to the GST superfamily. Mu family. As to quaternary structure, homodimer.

It localises to the cytoplasm. It catalyses the reaction RX + glutathione = an S-substituted glutathione + a halide anion + H(+). The enzyme catalyses 11(S)-hydroxy-14(S),15(S)-epoxy-(5Z,8Z,12E)-eicosatrienoate + glutathione = (11S,15S)-dihydroxy-14(R)-S-glutathionyl-(5Z,8Z,12E)-eicosatrienoate. In terms of biological role, conjugation of reduced glutathione to a wide number of exogenous and endogenous hydrophobic electrophiles. Participates in the formation of novel hepoxilin regioisomers. The protein is Glutathione S-transferase Mu 2 (GSTM2) of Pongo abelii (Sumatran orangutan).